We begin with the raw amino-acid sequence, 364 residues long: Probable UDP-arabinopyranose mutase 1 (364 aa).

Residues 103–105 carry the DXD motif motif; sequence DDD. Arg151 is a glycosylation site (N-linked (Glc...) arginine).

This sequence belongs to the RGP family. Homopentamer or homohexamer. The cofactor is Mn(2+). Mg(2+) is required as a cofactor. In terms of processing, reversibly glycosylated by UDP-glucose, UDP-xylose and UDP-galactose, but not UDP-mannose.

The protein resides in the secreted. The protein localises to the cell wall. It is found in the cell junction. It localises to the plasmodesma. Its subcellular location is the golgi apparatus. It carries out the reaction UDP-beta-L-arabinofuranose = UDP-beta-L-arabinopyranose. Its activity is regulated as follows. Inhibited by inhibitor protein (IP) which may be a form of sucrose synthase. Probable UDP-L-arabinose mutase involved in the biosynthesis of cell wall non-cellulosic polysaccharides. Was initially shown to possess an autoglycosylating activity which is dependent on the presence of UDP-glucose and manganese. This Pisum sativum (Garden pea) protein is Probable UDP-arabinopyranose mutase 1.